Consider the following 424-residue polypeptide: GDP-fucose protein O-fucosyltransferase 2 (424 aa).

Residues 1–20 (MHFFPIQLLVLFFAEKIAFA) form the signal peptide. 51-55 (GEGFN) provides a ligand contact to GDP-beta-L-fucose. Glu-52 functions as the Proton acceptor in the catalytic mechanism. Cys-154 and Cys-187 form a disulfide bridge. N-linked (GlcNAc...) asparagine glycosylation is present at Asn-205. GDP-beta-L-fucose is bound by residues 288-290 (HWR), Asp-366, and 383-384 (TF). The cysteines at positions 407 and 414 are disulfide-linked.

It belongs to the glycosyltransferase 68 family. Expressed in the anterior part of embryos, in the hypodermal and neuronal cells of the head. Expressed at different levels in a variety of cell types after hatching, including neuronal, hypodermal, muscle, intestinal, and somatic gonadal cells. Expressed in the nerve ring around the pharynx, in dorsal and ventral nerve cords, intestine, and a variety of hypodermal cells of L1-L3 larvae. Expressed in gonadal sheath cells, spermatheca, and tissues surrounding the vulva of adult hermaphrodites, and in the body wall muscle and hypodermal cells of adults of both sexes.

It is found in the endoplasmic reticulum. It localises to the golgi apparatus. It carries out the reaction L-seryl-[protein] + GDP-beta-L-fucose = 3-O-(alpha-L-fucosyl)-L-seryl-[protein] + GDP + H(+). The catalysed reaction is L-threonyl-[protein] + GDP-beta-L-fucose = 3-O-(alpha-L-fucosyl)-L-threonyl-[protein] + GDP + H(+). It functions in the pathway protein modification; protein glycosylation. In terms of biological role, catalyzes the reaction that attaches fucose through an O-glycosidic linkage to a conserved serine or threonine residue in the consensus sequence C1-X-X-S/T-C2 of thrombospondin type I repeats (TSRs) where C1 and C2 are the first and second cysteines of the repeat, respectively. O-fucosylates members of several protein families including the ADAMTS superfamily and the thrombospondin (TSP) and spondin families. The chain is GDP-fucose protein O-fucosyltransferase 2 (pad-2) from Caenorhabditis elegans.